Here is a 315-residue protein sequence, read N- to C-terminus: Methionyl-tRNA formyltransferase (315 aa).

Residue 113-116 (SLLP) participates in (6S)-5,6,7,8-tetrahydrofolate binding.

This sequence belongs to the Fmt family.

The catalysed reaction is L-methionyl-tRNA(fMet) + (6R)-10-formyltetrahydrofolate = N-formyl-L-methionyl-tRNA(fMet) + (6S)-5,6,7,8-tetrahydrofolate + H(+). Attaches a formyl group to the free amino group of methionyl-tRNA(fMet). The formyl group appears to play a dual role in the initiator identity of N-formylmethionyl-tRNA by promoting its recognition by IF2 and preventing the misappropriation of this tRNA by the elongation apparatus. In Yersinia pseudotuberculosis serotype O:1b (strain IP 31758), this protein is Methionyl-tRNA formyltransferase.